The following is a 585-amino-acid chain: Cytidine monophosphate-N-acetylneuraminic acid hydroxylase (585 aa).

In terms of domain architecture, Rieske spans 9–107 (LSPVEVANLK…VEMDENNRLL (99 aa)). Residues cysteine 49, histidine 51, cysteine 70, and histidine 73 each coordinate [2Fe-2S] cluster.

This sequence belongs to the CMP-Neu5Ac hydroxylase family. [2Fe-2S] cluster serves as cofactor.

It localises to the cytoplasm. It carries out the reaction CMP-N-acetyl-beta-neuraminate + 2 Fe(II)-[cytochrome b5] + O2 + 2 H(+) = CMP-N-glycoloyl-beta-neuraminate + 2 Fe(III)-[cytochrome b5] + H2O. It participates in amino-sugar metabolism; N-acetylneuraminate metabolism. Its function is as follows. Sialic acids are components of carbohydrate chains of glycoconjugates and are involved in cell-cell recognition and cell-pathogen interactions. Catalyzes the conversion of CMP-N-acetylneuraminic acid (CMP-Neu5Ac) into its hydroxylated derivative CMP-N-glycolylneuraminic acid (CMP-Neu5Gc), a sialic acid abundantly expressed at the surface of many cells. The protein is Cytidine monophosphate-N-acetylneuraminic acid hydroxylase (CMAH) of Pongo pygmaeus (Bornean orangutan).